The following is a 184-amino-acid chain: Probable RNA 2'-phosphotransferase (184 aa).

This sequence belongs to the KptA/TPT1 family.

Functionally, removes the 2'-phosphate from RNA via an intermediate in which the phosphate is ADP-ribosylated by NAD followed by a presumed transesterification to release the RNA and generate ADP-ribose 1''-2''-cyclic phosphate (APPR&gt;P). May function as an ADP-ribosylase. The chain is Probable RNA 2'-phosphotransferase from Rhodopirellula baltica (strain DSM 10527 / NCIMB 13988 / SH1).